The primary structure comprises 311 residues: Methionyl-tRNA formyltransferase (311 aa).

110 to 113 is a (6S)-5,6,7,8-tetrahydrofolate binding site; the sequence is SLLP.

Belongs to the Fmt family.

It carries out the reaction L-methionyl-tRNA(fMet) + (6R)-10-formyltetrahydrofolate = N-formyl-L-methionyl-tRNA(fMet) + (6S)-5,6,7,8-tetrahydrofolate + H(+). Functionally, attaches a formyl group to the free amino group of methionyl-tRNA(fMet). The formyl group appears to play a dual role in the initiator identity of N-formylmethionyl-tRNA by promoting its recognition by IF2 and preventing the misappropriation of this tRNA by the elongation apparatus. The sequence is that of Methionyl-tRNA formyltransferase from Streptococcus pneumoniae serotype 19F (strain G54).